The primary structure comprises 447 residues: Adenylosuccinate synthetase (447 aa).

GTP-binding positions include 35-41 (GDEGKGK) and 63-65 (GHT). D36 serves as the catalytic Proton acceptor. Residues D36 and G63 each coordinate Mg(2+). IMP-binding positions include 36 to 39 (DEGK), 61 to 64 (NAGH), T153, R167, N245, T260, and R324. The Proton donor role is filled by H64. 320-326 (VTTKRKR) is a binding site for substrate. GTP-binding positions include R326, 352-354 (KLD), and 435-437 (GVG).

It belongs to the adenylosuccinate synthetase family. As to quaternary structure, homodimer. Requires Mg(2+) as cofactor.

The protein resides in the cytoplasm. It carries out the reaction IMP + L-aspartate + GTP = N(6)-(1,2-dicarboxyethyl)-AMP + GDP + phosphate + 2 H(+). The protein operates within purine metabolism; AMP biosynthesis via de novo pathway; AMP from IMP: step 1/2. Its function is as follows. Plays an important role in the de novo pathway and in the salvage pathway of purine nucleotide biosynthesis. Catalyzes the first committed step in the biosynthesis of AMP from IMP. Plays a role in the regulation of adult life span. This chain is Adenylosuccinate synthetase, found in Drosophila melanogaster (Fruit fly).